The sequence spans 329 residues: MSQYVVCALYKFVALDDYQEIRQPLTEVLEANQIRGTLLLASEGINGTVAGKRESIDALLQWFKQDSRLADVVYKESFNEEQPFNRTKVKLKKEIVTMGVEGIDPRHVVGTYVKPNEWNALISDPDVILVDTRNDYEVDIGTFKNAVNPNTETFREFPQYVEDNLDPKKHKKVAMFCTGGIRCEKSTAYMKEQGFDEVYHLEGGILKYLEEVPEEESMWEGDCYVFDGRVAVNHQLEKSGYDVCNACRLPITDEDKASDHFEKGVSCPKCIDKHSDEQKARFREREKQVQLSNARGETHVGGDAAHLIDQRKKEKLAHKEQQRSGKKAK.

The Rhodanese domain maps to 123–217 (SDPDVILVDT…YLEEVPEEES (95 aa)). Cys177 serves as the catalytic Cysteine persulfide intermediate. The segment at 285–329 (REKQVQLSNARGETHVGGDAAHLIDQRKKEKLAHKEQQRSGKKAK) is disordered. The span at 296 to 323 (GETHVGGDAAHLIDQRKKEKLAHKEQQR) shows a compositional bias: basic and acidic residues.

This sequence belongs to the TrhO family.

The catalysed reaction is uridine(34) in tRNA + AH2 + O2 = 5-hydroxyuridine(34) in tRNA + A + H2O. In terms of biological role, catalyzes oxygen-dependent 5-hydroxyuridine (ho5U) modification at position 34 in tRNAs. The protein is tRNA uridine(34) hydroxylase of Vibrio atlanticus (strain LGP32) (Vibrio splendidus (strain Mel32)).